Consider the following 133-residue polypeptide: Large ribosomal subunit protein uL14m (133 aa).

It belongs to the universal ribosomal protein uL14 family. As to quaternary structure, probably part of the large ribosomal subunit.

The protein localises to the hydrogenosome. The protein is Large ribosomal subunit protein uL14m (rpl14) of Nyctotherus ovalis.